Here is a 424-residue protein sequence, read N- to C-terminus: Probable methyltransferase EP424R (424 aa).

The Adrift-type SAM-dependent 2'-O-MTase domain maps to 104 to 316; that stretch reads QIVTNAWLKM…TYIVGKNRLR (213 aa). S-adenosyl-L-methionine contacts are provided by Gly136 and Asp229. Lys269 functions as the Proton acceptor in the catalytic mechanism.

The protein localises to the virion. The chain is Probable methyltransferase EP424R from African swine fever virus (strain Badajoz 1971 Vero-adapted) (Ba71V).